The following is a 163-amino-acid chain: Ribosome maturation factor RimM (163 aa).

In terms of domain architecture, PRC barrel spans 90–155; it reads VGEYYCKDLV…ADIDLNKKRL (66 aa).

It belongs to the RimM family. In terms of assembly, binds ribosomal protein uS19.

The protein localises to the cytoplasm. An accessory protein needed during the final step in the assembly of 30S ribosomal subunit, possibly for assembly of the head region. Essential for efficient processing of 16S rRNA. May be needed both before and after RbfA during the maturation of 16S rRNA. It has affinity for free ribosomal 30S subunits but not for 70S ribosomes. In Neorickettsia sennetsu (strain ATCC VR-367 / Miyayama) (Ehrlichia sennetsu), this protein is Ribosome maturation factor RimM.